We begin with the raw amino-acid sequence, 224 residues long: Ribonuclease 3 (224 aa).

One can recognise an RNase III domain in the interval 4–126; sequence LDRLQRQISY…IIGAISLDSS (123 aa). Residue Glu-39 coordinates Mg(2+). Asp-43 is an active-site residue. Mg(2+) is bound by residues Asp-112 and Glu-115. Glu-115 is a catalytic residue. The 71-residue stretch at 153-223 folds into the DRBM domain; sequence DPKTRLQEYL…AEQILTALEI (71 aa).

The protein belongs to the ribonuclease III family. In terms of assembly, homodimer. Requires Mg(2+) as cofactor.

The protein resides in the cytoplasm. It catalyses the reaction Endonucleolytic cleavage to 5'-phosphomonoester.. In terms of biological role, digests double-stranded RNA. Involved in the processing of primary rRNA transcript to yield the immediate precursors to the large and small rRNAs (23S and 16S). Processes some mRNAs, and tRNAs when they are encoded in the rRNA operon. Processes pre-crRNA and tracrRNA of type II CRISPR loci if present in the organism. The protein is Ribonuclease 3 of Mannheimia succiniciproducens (strain KCTC 0769BP / MBEL55E).